The chain runs to 205 residues: Large ribosomal subunit protein bL25A (205 aa).

It belongs to the bacterial ribosomal protein bL25 family. CTC subfamily. As to quaternary structure, part of the 50S ribosomal subunit; part of the 5S rRNA/L5/L18/L25 subcomplex. Contacts the 5S rRNA. Binds to the 5S rRNA independently of L5 and L18.

Functionally, this is one of the proteins that binds to the 5S RNA in the ribosome where it forms part of the central protuberance. In Symbiobacterium thermophilum (strain DSM 24528 / JCM 14929 / IAM 14863 / T), this protein is Large ribosomal subunit protein bL25A.